A 419-amino-acid polypeptide reads, in one-letter code: Synaptotagmin-2 (419 aa).

Residues 1 to 62 (MRNIFKRNQE…NEINKIPLPP (62 aa)) are Vesicular-facing. Residues 16 to 39 (ATTTATMPIGPVDNSTESGGAGES) are disordered. N29 carries N-linked (GlcNAc...) asparagine glycosylation. Residues 63 to 83 (WALIAIAVVAGLLLLTCCFCI) form a helical membrane-spanning segment. Residues 84–419 (CKKCCCKKKK…EVDALLGKNK (336 aa)) lie on the Cytoplasmic side of the membrane. Residues 99 to 138 (GKGMKNAMNMKDMKGGQDDDDAETGLTEGEGEGEEEKEPE) form a disordered region. Over residues 116–136 (DDDDAETGLTEGEGEGEEEKE) the composition is skewed to acidic residues. 2 positions are modified to phosphothreonine: T122 and T125. The interval 133–379 (EEKEPENLGK…AIGKIFVGSN (247 aa)) is phospholipid binding. C2 domains follow at residues 139–258 (NLGK…EEWR) and 270–403 (KLGD…AQWH). Ca(2+) is bound by residues L169, D170, and D176. Residue T199 is modified to Phosphothreonine. Residue Y227 is modified to Phosphotyrosine. D228, F229, D230, S233, K234, D236, D301, D307, D361, and D363 together coordinate Ca(2+). T383 is subject to Phosphothreonine.

The protein belongs to the synaptotagmin family. Homotetramer. Heterodimer; heterodimerizes with SYT1 in presence of calcium. Interacts with STON2. Interacts with SCAMP5. Interacts with PRRT2. Requires Ca(2+) as cofactor. Post-translationally, phosphorylation at Thr-199 by WNK1, changes the calcium requirement for SYT2-binding to phospholipid membranes. Expressed at the neuromuscular junction. Expressed in melanocytes.

The protein localises to the cytoplasmic vesicle. It localises to the secretory vesicle. The protein resides in the synaptic vesicle membrane. It is found in the chromaffin granule membrane. Its subcellular location is the cytoplasm. In terms of biological role, exhibits calcium-dependent phospholipid and inositol polyphosphate binding properties. May have a regulatory role in the membrane interactions during trafficking of synaptic vesicles at the active zone of the synapse. Plays a role in dendrite formation by melanocytes. This chain is Synaptotagmin-2, found in Homo sapiens (Human).